We begin with the raw amino-acid sequence, 96 residues long: Small ribosomal subunit protein bS20 (96 aa).

This sequence belongs to the bacterial ribosomal protein bS20 family.

Binds directly to 16S ribosomal RNA. The polypeptide is Small ribosomal subunit protein bS20 (Thermotoga petrophila (strain ATCC BAA-488 / DSM 13995 / JCM 10881 / RKU-1)).